Here is a 332-residue protein sequence, read N- to C-terminus: Glycerol-3-phosphate dehydrogenase [NAD(P)+] (332 aa).

W11, R30, and K108 together coordinate NADPH. The sn-glycerol 3-phosphate site is built by K108, G137, and S139. A141 contacts NADPH. Positions 192, 245, 255, 256, and 257 each coordinate sn-glycerol 3-phosphate. K192 serves as the catalytic Proton acceptor. Position 256 (R256) interacts with NADPH. NADPH is bound by residues V280 and E282.

The protein belongs to the NAD-dependent glycerol-3-phosphate dehydrogenase family.

The protein resides in the cytoplasm. It catalyses the reaction sn-glycerol 3-phosphate + NAD(+) = dihydroxyacetone phosphate + NADH + H(+). It carries out the reaction sn-glycerol 3-phosphate + NADP(+) = dihydroxyacetone phosphate + NADPH + H(+). It functions in the pathway membrane lipid metabolism; glycerophospholipid metabolism. In terms of biological role, catalyzes the reduction of the glycolytic intermediate dihydroxyacetone phosphate (DHAP) to sn-glycerol 3-phosphate (G3P), the key precursor for phospholipid synthesis. This is Glycerol-3-phosphate dehydrogenase [NAD(P)+] from Burkholderia multivorans (strain ATCC 17616 / 249).